The following is a 113-amino-acid chain: Large ribosomal subunit protein uL18 (113 aa).

Belongs to the universal ribosomal protein uL18 family. Part of the 50S ribosomal subunit; part of the 5S rRNA/L5/L18/L25 subcomplex. Contacts the 5S and 23S rRNAs.

Its function is as follows. This is one of the proteins that bind and probably mediate the attachment of the 5S RNA into the large ribosomal subunit, where it forms part of the central protuberance. This is Large ribosomal subunit protein uL18 from Phocaeicola vulgatus (strain ATCC 8482 / DSM 1447 / JCM 5826 / CCUG 4940 / NBRC 14291 / NCTC 11154) (Bacteroides vulgatus).